The primary structure comprises 314 residues: Type II methyltransferase M.HpaI (314 aa).

The protein belongs to the N(4)/N(6)-methyltransferase family.

The enzyme catalyses a 2'-deoxyadenosine in DNA + S-adenosyl-L-methionine = an N(6)-methyl-2'-deoxyadenosine in DNA + S-adenosyl-L-homocysteine + H(+). A beta subtype methylase that recognizes the double-stranded sequence 5'-GTTAAC-3', methylates A-5 on both strands, and protects the DNA from cleavage by the HpaI endonuclease. The chain is Type II methyltransferase M.HpaI (hpaIM) from Haemophilus parainfluenzae.